We begin with the raw amino-acid sequence, 418 residues long: MSPAEREFDIVLYGATGFSGKLTAEHLAHSGSTARIALAGRSSERLRGVRMMLGPNAADWPLILADASQPLTLEAMAARAQVVLTTVGPYTRYGLPLVAACAKAGTDYADLTGELMFCRNSIDLYHKQAADTGARIILACGFDSIPSDLNVYQLYRRSVEDGTGELCDTDLVLRSFSQRWVSGGSVATYSEAMRTASSDPEARRLVTDPYTLTTDRGAEPELGAQPDFLRRPGRDLAPELAGFWTGGFVQAPFNTRIVRRSNALQEWAYGRRFRYSETMSLGKSMAAPILAAAVTGTVAGTIGLGNKYFDRLPRRLVERVTPKPGTGPSRKTQERGHYTFETYTTTTTGARYRATFAHNVDAYKSTAVLLAQSGLALALDRDRLAELRGVLTPAAAMGDALLARLPGAGVVMGTTRLS.

The protein belongs to the saccharopine dehydrogenase family. Enoyl reductase subfamily.

Functionally, involved in the reduction of the double bond between C-4 and C-5 during phthiocerol dimycocerosates (DIM A) and glycosylated phenolphthiocerol dimycocerosates (PGL) biosynthesis. The polypeptide is Trans-acting enoyl reductase (Mycobacterium tuberculosis (strain ATCC 25177 / H37Ra)).